Reading from the N-terminus, the 89-residue chain is Small ribosomal subunit protein uS15 (89 aa).

The protein belongs to the universal ribosomal protein uS15 family. In terms of assembly, part of the 30S ribosomal subunit. Forms a bridge to the 50S subunit in the 70S ribosome, contacting the 23S rRNA.

Functionally, one of the primary rRNA binding proteins, it binds directly to 16S rRNA where it helps nucleate assembly of the platform of the 30S subunit by binding and bridging several RNA helices of the 16S rRNA. Its function is as follows. Forms an intersubunit bridge (bridge B4) with the 23S rRNA of the 50S subunit in the ribosome. The sequence is that of Small ribosomal subunit protein uS15 from Pectobacterium atrosepticum (strain SCRI 1043 / ATCC BAA-672) (Erwinia carotovora subsp. atroseptica).